Reading from the N-terminus, the 41-residue chain is Mu-conotoxin pn4c (41 aa).

The propeptide occupies 1-24 (DQPAERMQDDISSEHHPFFDPVKR).

It belongs to the conotoxin M superfamily. Post-translationally, contains 3 disulfide bonds. They are not added, since framework IV presents two different connectivities (I-V, II-III, IV-VI and I-III, II-V, IV-VI). Expressed by the venom duct.

The protein localises to the secreted. Its function is as follows. Mu-conotoxins block voltage-gated sodium channels (Nav). Blocks reversibly sodium channels in molluskan neurons, but has no effect on sodium currents in bovine chromaffin cells or in rat brain synaptosomes. Induces paralysis in mollusks (C.retripictus). The polypeptide is Mu-conotoxin pn4c (Conus pennaceus (Feathered cone)).